A 114-amino-acid polypeptide reads, in one-letter code: Ig heavy chain V-A2 region BS-1 (114 aa).

Glutamine 1 carries the post-translational modification Pyrrolidone carboxylic acid. The Ig-like domain occupies 1–107 (QSVKESEGGL…YLGLMDVWGP (107 aa)).

This chain is Ig heavy chain V-A2 region BS-1, found in Oryctolagus cuniculus (Rabbit).